Reading from the N-terminus, the 484-residue chain is Ferrochelatase-2, chloroplastic (484 aa).

It belongs to the ferrochelatase family.

Its subcellular location is the plastid. The protein resides in the chloroplast. The catalysed reaction is heme b + 2 H(+) = protoporphyrin IX + Fe(2+). It functions in the pathway porphyrin-containing compound metabolism; protoheme biosynthesis; protoheme from protoporphyrin-IX: step 1/1. Catalyzes the ferrous insertion into protoporphyrin IX. The polypeptide is Ferrochelatase-2, chloroplastic (HEMH) (Hordeum vulgare (Barley)).